The chain runs to 494 residues: UPF0164 protein TP_0859/TP_0860 (494 aa).

The first 44 residues, 1–44, serve as a signal peptide directing secretion; that stretch reads MVRRPCVSAAPVRVGGRLVFGFARVGSRGLCLGALLLSPRIVLA.

Belongs to the UPF0164 family.

The chain is UPF0164 protein TP_0859/TP_0860 from Treponema pallidum (strain Nichols).